Consider the following 126-residue polypeptide: Holo-[acyl-carrier-protein] synthase (126 aa).

Mg(2+)-binding residues include D9 and E58.

The protein belongs to the P-Pant transferase superfamily. AcpS family. Requires Mg(2+) as cofactor.

Its subcellular location is the cytoplasm. It carries out the reaction apo-[ACP] + CoA = holo-[ACP] + adenosine 3',5'-bisphosphate + H(+). Transfers the 4'-phosphopantetheine moiety from coenzyme A to a Ser of acyl-carrier-protein. This is Holo-[acyl-carrier-protein] synthase from Escherichia fergusonii (strain ATCC 35469 / DSM 13698 / CCUG 18766 / IAM 14443 / JCM 21226 / LMG 7866 / NBRC 102419 / NCTC 12128 / CDC 0568-73).